Reading from the N-terminus, the 204-residue chain is Elongation factor Ts (204 aa).

Residues 87 to 90 form an involved in Mg(2+) ion dislocation from EF-Tu region; the sequence is TDFV.

Belongs to the EF-Ts family.

It is found in the cytoplasm. Associates with the EF-Tu.GDP complex and induces the exchange of GDP to GTP. It remains bound to the aminoacyl-tRNA.EF-Tu.GTP complex up to the GTP hydrolysis stage on the ribosome. This is Elongation factor Ts from Frankia alni (strain DSM 45986 / CECT 9034 / ACN14a).